The chain runs to 93 residues: MKITILFLTLLVLSSSCTSIITKTMNSKETIYLDNPAVSPSIDQNLVDIHLGHSFVQGVMSFCYDCGKACFRRGKNLARCQKFVCRCTISKLR.

The signal sequence occupies residues M1–S19. 3 disulfides stabilise this stretch: C63–C80, C66–C85, and C70–C87.

Belongs to the DEFL family.

It localises to the secreted. The chain is Defensin-like protein 209 from Arabidopsis thaliana (Mouse-ear cress).